The chain runs to 139 residues: MPTINQLIRKGRKAKVKKSDSPALNKGYNSFKKVQTDLSSPQKRGVCTRVGTMTPKKPNSALRKYARVRLSNQIEVTAYIPGIGHNLQEHSVVLIRGGRVKDLPGVRYHIVRGALDTAGVQDRMQGRSKYGTKRPKDKK.

The interval 1-55 is disordered; the sequence is MPTINQLIRKGRKAKVKKSDSPALNKGYNSFKKVQTDLSSPQKRGVCTRVGTMTP. Polar residues predominate over residues 32–42; sequence KKVQTDLSSPQ.

The protein belongs to the universal ribosomal protein uS12 family. Part of the 30S ribosomal subunit. Contacts proteins S8 and S17. May interact with IF1 in the 30S initiation complex.

Its function is as follows. With S4 and S5 plays an important role in translational accuracy. Interacts with and stabilizes bases of the 16S rRNA that are involved in tRNA selection in the A site and with the mRNA backbone. Located at the interface of the 30S and 50S subunits, it traverses the body of the 30S subunit contacting proteins on the other side and probably holding the rRNA structure together. The combined cluster of proteins S8, S12 and S17 appears to hold together the shoulder and platform of the 30S subunit. The protein is Small ribosomal subunit protein uS12 of Halalkalibacterium halodurans (strain ATCC BAA-125 / DSM 18197 / FERM 7344 / JCM 9153 / C-125) (Bacillus halodurans).